The chain runs to 499 residues: Dual specificity protein kinase CLK2 (499 aa).

A disordered region spans residues M1–R67. Residues H8–H21 show a composition bias toward basic and acidic residues. The segment covering Y22–R33 has biased composition (basic residues). S34 bears the Phosphoserine; by PKB/AKT1 mark. Positions R47 to R67 are enriched in basic and acidic residues. Position 98 is a phosphoserine (S98). A Phosphotyrosine; by autocatalysis modification is found at Y99. Residues Y101–V143 are disordered. Basic residues predominate over residues R112–T127. T127 is subject to Phosphothreonine; by PKB/AKT1. The residue at position 142 (S142) is a Phosphoserine; by autocatalysis. Y153 carries the phosphotyrosine modification. Residues Y163 to F479 form the Protein kinase domain. ATP contacts are provided by residues L169–V177 and K193. D290 acts as the Proton acceptor in catalysis. T344 bears the Phosphothreonine; by PKB/AKT2 mark.

This sequence belongs to the protein kinase superfamily. CMGC Ser/Thr protein kinase family. Lammer subfamily. As to quaternary structure, interacts with RBMX. Interacts with AKT1 and UBL5. In terms of processing, autophosphorylates on all three types of residues. Phosphorylation on Ser-34 and Thr-127 by AKT1 is induced by ionizing radiation or insulin. Phosphorylation plays a critical role in cell proliferation following low dose radiation and prevents cell death following high dose radiation. Phosphorylation at Thr-344 by PKB/AKT2 induces its kinase activity which is required for its stability. The phosphorylation status at Ser-142 influences its subnuclear localization; inhibition of phosphorylation at Ser-142 results in accumulation in the nuclear speckle. Endothelial cells. Expressed in androgen-dependent prostate cancer cells.

The protein localises to the nucleus. It localises to the nucleus speckle. The catalysed reaction is L-seryl-[protein] + ATP = O-phospho-L-seryl-[protein] + ADP + H(+). The enzyme catalyses L-threonyl-[protein] + ATP = O-phospho-L-threonyl-[protein] + ADP + H(+). It carries out the reaction L-tyrosyl-[protein] + ATP = O-phospho-L-tyrosyl-[protein] + ADP + H(+). 5,6-dichloro-1-b-D-ribofuranosylbenzimidazole (DRB) inhibits autophosphorylation. TG003 inhibits its kinase activity and affects the regulation of alternative splicing mediated by phosphorylation of SR proteins. Dual specificity kinase acting on both serine/threonine and tyrosine-containing substrates. Phosphorylates serine- and arginine-rich (SR) proteins of the spliceosomal complex. May be a constituent of a network of regulatory mechanisms that enable SR proteins to control RNA splicing and can cause redistribution of SR proteins from speckles to a diffuse nucleoplasmic distribution. Acts as a suppressor of hepatic gluconeogenesis and glucose output by repressing PPARGC1A transcriptional activity on gluconeogenic genes via its phosphorylation. Phosphorylates PPP2R5B thereby stimulating the assembly of PP2A phosphatase with the PPP2R5B-AKT1 complex leading to dephosphorylation of AKT1. Phosphorylates: PTPN1, SRSF1 and SRSF3. Regulates the alternative splicing of tissue factor (F3) pre-mRNA in endothelial cells. Phosphorylates PAGE4 at several serine and threonine residues and this phosphorylation attenuates the ability of PAGE4 to potentiate the transcriptional activator activity of JUN. In Homo sapiens (Human), this protein is Dual specificity protein kinase CLK2 (CLK2).